The primary structure comprises 227 residues: Probable chorismate pyruvate-lyase (227 aa).

Substrate contacts are provided by Arg75, Leu113, and Glu173. Positions 192 to 227 (SGDWSAHPRVREHGRPLEHTASRAHPATRASDEQRR) are disordered. A compositionally biased stretch (basic and acidic residues) spans 200–212 (RVREHGRPLEHTA).

It belongs to the UbiC family.

The protein resides in the cytoplasm. It carries out the reaction chorismate = 4-hydroxybenzoate + pyruvate. The protein operates within cofactor biosynthesis; ubiquinone biosynthesis. Functionally, removes the pyruvyl group from chorismate, with concomitant aromatization of the ring, to provide 4-hydroxybenzoate (4HB) for the ubiquinone pathway. The sequence is that of Probable chorismate pyruvate-lyase from Paraburkholderia xenovorans (strain LB400).